The primary structure comprises 100 residues: Small ribosomal subunit protein uS14c (100 aa).

Belongs to the universal ribosomal protein uS14 family. As to quaternary structure, part of the 30S ribosomal subunit.

Its subcellular location is the plastid. The protein localises to the chloroplast. In terms of biological role, binds 16S rRNA, required for the assembly of 30S particles. This Pisum sativum (Garden pea) protein is Small ribosomal subunit protein uS14c.